Consider the following 204-residue polypeptide: Somatotropin (204 aa).

The signal sequence occupies residues methionine 1–serine 17. Glutamine 18 carries the pyrrolidone carboxylic acid modification. Histidine 36 contributes to the Zn(2+) binding site. Cysteine 69 and cysteine 177 form a disulfide bridge. Zn(2+) is bound at residue glutamate 186. A disulfide bond links cysteine 194 and cysteine 202.

The protein belongs to the somatotropin/prolactin family.

It localises to the secreted. Its function is as follows. Growth hormone plays an important role in growth control and is involved in the regulation of several anabolic processes. Implicated as an osmoregulatory substance important for seawater adaptation. In Larimichthys crocea (Large yellow croaker), this protein is Somatotropin (gh).